The following is a 529-amino-acid chain: Serine/threonine-protein kinase RIO2 (529 aa).

The Protein kinase domain occupies 97–273 (VGNQIGIGKE…RDVTCVRTFF (177 aa)). Residue Lys123 participates in ATP binding. The active-site Proton acceptor is the Asp228. Disordered regions lie at residues 331–366 (RNRQ…KDHE) and 411–452 (EGYK…GHVA). Acidic residues predominate over residues 337–346 (DLGEDEDDSD). Positions 411–428 (EGYKDIELPPEDFKRPAD) are enriched in basic and acidic residues. Acidic residues predominate over residues 429–447 (SENDDENDEDEEEGEEEDA).

It belongs to the protein kinase superfamily. RIO-type Ser/Thr kinase family. Mg(2+) serves as cofactor. In terms of tissue distribution, expressed in pharynx (metacorpus and posterior bulbus). Expression is restricted to adult stage.

The catalysed reaction is L-seryl-[protein] + ATP = O-phospho-L-seryl-[protein] + ADP + H(+). It catalyses the reaction L-threonyl-[protein] + ATP = O-phospho-L-threonyl-[protein] + ADP + H(+). In terms of biological role, required for larval development. This Caenorhabditis elegans protein is Serine/threonine-protein kinase RIO2.